The sequence spans 49 residues: Large ribosomal subunit protein bL33 (49 aa).

The protein belongs to the bacterial ribosomal protein bL33 family.

This Moorella thermoacetica (strain ATCC 39073 / JCM 9320) protein is Large ribosomal subunit protein bL33.